The primary structure comprises 268 residues: Interleukin-2 receptor subunit alpha (268 aa).

An N-terminal signal peptide occupies residues 1 to 21; it reads MEPRLLMLGFLSLTIVPSCRA. The region spanning 22–79 is the Sushi 1 domain; it reads ELCLYDPPEVPNATFKALSYKNGTILNCECKRGFRRLKELVYMRCLGNSWSSNCQCTS. At 22-236 the chain is on the extracellular side; that stretch reads ELCLYDPPEV…ETFVLTMEYK (215 aa). 3 cysteine pairs are disulfide-bonded: Cys24–Cys66, Cys49–Cys75, and Cys51–Cys77. 2 N-linked (GlcNAc...) asparagine glycosylation sites follow: Asn33 and Asn43. Residues 86-109 form a disordered region; the sequence is RKQVTAQLEHQKEQQTTTDMQKPT. The span at 88 to 109 shows a compositional bias: polar residues; that stretch reads QVTAQLEHQKEQQTTTDMQKPT. Asn116 carries N-linked (GlcNAc...) asparagine glycosylation. The Sushi 2 domain occupies 119-182; it reads GHCREPPPWK…WTQPQLTCVD (64 aa). Intrachain disulfides connect Cys121/Cys164 and Cys148/Cys180. The interval 189–219 is disordered; sequence FLASEESQGSRNSSPESETSCPITTTDFPQP. Over residues 193–211 the composition is skewed to polar residues; it reads EESQGSRNSSPESETSCPI. Residues 237-257 form a helical membrane-spanning segment; the sequence is VAVASCLFLLISILLLSGLTW. The Cytoplasmic segment spans residues 258–268; sequence QHRWRKSRRTI.

In terms of assembly, non-covalent dimer of an alpha and a beta subunit. IL2R exists in 3 different forms: a high affinity dimer, an intermediate affinity monomer (beta subunit), and a low affinity monomer (alpha subunit). The high and intermediate affinity forms also associate with a gamma subunit.

The protein resides in the membrane. Its function is as follows. Receptor for interleukin-2. The receptor is involved in the regulation of immune tolerance by controlling regulatory T cells (TREGs) activity. TREGs suppress the activation and expansion of autoreactive T-cells. This Mus musculus (Mouse) protein is Interleukin-2 receptor subunit alpha (Il2ra).